A 385-amino-acid chain; its full sequence is MSGDSSGRGPEGRGRGRDPHRDRTRSRSRSRSPLSPRSRRGSARERREAPERPSLEDTEPSDSGDEMMDPASLEAEADQGLCRQIRHQYRALINSVQQNREDILNAGDKLTEVLEEANTLFNEVSRAREAVLDAHFLVLASDLGKEKAKQLRSDLSSFDMLRYVETLLTHMGVNPLEAEELIRDEDSPDFEFIVYDSWKITGRTAENTFNKTHTFHFLLGSIYGECPVPKPRVDRPRKVPVIQEERAMPAQLRRMEESHQEATEKEVERILGLLQTYFREDPDTPMSFFDFVVDPHSFPRTVENIFHVSFIIRDGFARIRLDQDRLPVIEPVSINEENEGFEHNTQVRNQGIIALSYRDWEEIVKTFEISEPVITPSQRQQKPSA.

Residues 1–69 form a disordered region; the sequence is MSGDSSGRGP…PSDSGDEMMD (69 aa). 2 stretches are compositionally biased toward basic and acidic residues: residues 10-21 and 42-55; these read PEGRGRGRDPHR and SARE…RPSL. Positions 56 to 68 are enriched in acidic residues; sequence EDTEPSDSGDEMM. Thr-345 is modified (phosphothreonine). At Ser-377 the chain carries Phosphoserine.

Belongs to the NSE4 family. Component of the SMC5-SMC6 complex which consists at least of SMC5, SMC6, NSMCE2, NSMCE1, NSMCE4A or EID3 and NSMCE3. NSMCE1, NSMCE4A or EID3 and NSMCE3 probably form a subcomplex that bridges the head domains of the SMC5:SMC6 heterodimer. Interacts with NSMCE3.

It localises to the nucleus. The protein resides in the chromosome. The protein localises to the telomere. Its function is as follows. Component of the SMC5-SMC6 complex, a complex involved in DNA double-strand breaks by homologous recombination. The complex may promote sister chromatid homologous recombination by recruiting the SMC1-SMC3 cohesin complex to double-strand breaks. The complex is required for telomere maintenance via recombination in ALT (alternative lengthening of telomeres) cell lines and mediates sumoylation of shelterin complex (telosome) components which is proposed to lead to shelterin complex disassembly in ALT-associated PML bodies (APBs). Is involved in positive regulation of response to DNA damage stimulus. In Homo sapiens (Human), this protein is Non-structural maintenance of chromosomes element 4 homolog A (NSMCE4A).